Consider the following 49-residue polypeptide: Large ribosomal subunit protein bL33 (49 aa).

This sequence belongs to the bacterial ribosomal protein bL33 family.

In Natranaerobius thermophilus (strain ATCC BAA-1301 / DSM 18059 / JW/NM-WN-LF), this protein is Large ribosomal subunit protein bL33.